The chain runs to 813 residues: LPS-assembly protein LptD (813 aa).

Residues 1 to 29 (MTEQRRSPNNRALPSPAPTSVPARARRAG) form a disordered region. The signal sequence occupies residues 1–52 (MTEQRRSPNNRALPSPAPTSVPARARRAGGLHAGALRPLVLAMASLSAGAHA).

This sequence belongs to the LptD family. Component of the lipopolysaccharide transport and assembly complex. Interacts with LptE and LptA.

It localises to the cell outer membrane. Together with LptE, is involved in the assembly of lipopolysaccharide (LPS) at the surface of the outer membrane. The protein is LPS-assembly protein LptD of Cupriavidus necator (strain ATCC 17699 / DSM 428 / KCTC 22496 / NCIMB 10442 / H16 / Stanier 337) (Ralstonia eutropha).